The chain runs to 728 residues: 1,4-alpha-glucan branching enzyme GlgB (728 aa).

Catalysis depends on Asp405, which acts as the Nucleophile. Glu458 (proton donor) is an active-site residue.

It belongs to the glycosyl hydrolase 13 family. GlgB subfamily. Monomer.

The enzyme catalyses Transfers a segment of a (1-&gt;4)-alpha-D-glucan chain to a primary hydroxy group in a similar glucan chain.. The protein operates within glycan biosynthesis; glycogen biosynthesis. Functionally, catalyzes the formation of the alpha-1,6-glucosidic linkages in glycogen by scission of a 1,4-alpha-linked oligosaccharide from growing alpha-1,4-glucan chains and the subsequent attachment of the oligosaccharide to the alpha-1,6 position. The polypeptide is 1,4-alpha-glucan branching enzyme GlgB (Salmonella arizonae (strain ATCC BAA-731 / CDC346-86 / RSK2980)).